A 186-amino-acid chain; its full sequence is ADP-ribosylation factor-like protein alp41 (186 aa).

Gly2 carries N-myristoyl glycine lipidation. GTP is bound by residues 23 to 30, 66 to 70, and 125 to 128; these read GLDNAGKT, DIGGQ, and NKSD.

This sequence belongs to the small GTPase superfamily. Arf family.

It localises to the cytoplasm. The protein resides in the cytoskeleton. Its function is as follows. Has a role in the cofactor-dependent pathway of microtubule biogenesis. Required for growth polarity control. The chain is ADP-ribosylation factor-like protein alp41 (alp41) from Schizosaccharomyces pombe (strain 972 / ATCC 24843) (Fission yeast).